The primary structure comprises 552 residues: CTP synthase (552 aa).

Residues 1–271 are amidoligase domain; sequence MASAASSKHL…DAFVVRRLGL (271 aa). Residue S18 participates in CTP binding. S18 contributes to the UTP binding site. ATP-binding positions include 19–24 and D76; that span reads SLGKGL. Residues D76 and E145 each contribute to the Mg(2+) site. CTP contacts are provided by residues 152-154, 192-197, and K228; these read DIE and KTKPTQ. Residues 192 to 197 and K228 each bind UTP; that span reads KTKPTQ. A Glutamine amidotransferase type-1 domain is found at 296 to 546; that stretch reads TIALVGKYVD…IEAALKYSAG (251 aa). G359 contacts L-glutamine. C386 serves as the catalytic Nucleophile; for glutamine hydrolysis. L-glutamine is bound by residues 387 to 390, E410, and R472; that span reads LGLQ. Residues H519 and E521 contribute to the active site.

The protein belongs to the CTP synthase family. As to quaternary structure, homotetramer.

It carries out the reaction UTP + L-glutamine + ATP + H2O = CTP + L-glutamate + ADP + phosphate + 2 H(+). It catalyses the reaction L-glutamine + H2O = L-glutamate + NH4(+). The catalysed reaction is UTP + NH4(+) + ATP = CTP + ADP + phosphate + 2 H(+). It functions in the pathway pyrimidine metabolism; CTP biosynthesis via de novo pathway; CTP from UDP: step 2/2. Its activity is regulated as follows. Allosterically activated by GTP, when glutamine is the substrate; GTP has no effect on the reaction when ammonia is the substrate. The allosteric effector GTP functions by stabilizing the protein conformation that binds the tetrahedral intermediate(s) formed during glutamine hydrolysis. Inhibited by the product CTP, via allosteric rather than competitive inhibition. Catalyzes the ATP-dependent amination of UTP to CTP with either L-glutamine or ammonia as the source of nitrogen. Regulates intracellular CTP levels through interactions with the four ribonucleotide triphosphates. The sequence is that of CTP synthase from Thermobifida fusca (strain YX).